The following is a 674-amino-acid chain: Probable copper-transporting P-type ATPase B (674 aa).

Positions 1–22 (MNHSNQMHHDNHASHDHHSGHA) are disordered. Positions 7–19 (MHHDNHASHDHHS) are enriched in basic and acidic residues. The next 6 helical transmembrane spans lie at 32–52 (FFVSLIFAIPIILLSPLMGVN), 57–77 (FTFPGSEWVVLILSTILFFYG), 95–115 (GMMTLVALGISVAYIYSLYAF), 127–147 (TMDFFWELATLILIMLLGHWI), 284–304 (GYLFYFAVSVGVISFIVWMLI), and 315–335 (LVTVLVIACPHALGLAIPLVT). Asp367 acts as the 4-aspartylphosphate intermediate in catalysis. Mg(2+)-binding residues include Asp565 and Asp569. A run of 2 helical transmembrane segments spans residues 623-645 (LWWGAGYNIVAVPLAAGILAFIG) and 649-671 (SPAIGAILMSLSTIIVAINAFTL).

This sequence belongs to the cation transport ATPase (P-type) (TC 3.A.3) family. Type IB subfamily.

The protein localises to the cell membrane. The catalysed reaction is Cu(+)(in) + ATP + H2O = Cu(+)(out) + ADP + phosphate + H(+). In terms of biological role, involved in copper transport. The protein is Probable copper-transporting P-type ATPase B (copB) of Staphylococcus aureus (strain USA300 / TCH1516).